Here is a 314-residue protein sequence, read N- to C-terminus: Caspase-like protein (314 aa).

This sequence belongs to the peptidase C14A family.

May be involved in viral replication. The sequence is that of Caspase-like protein from Heliothis virescens ascovirus 3e (HvAV-3e).